Consider the following 144-residue polypeptide: Deoxyuridine 5'-triphosphate nucleotidohydrolase (144 aa).

Substrate is bound by residues 63–65, Asn-76, and 80–82; these read RSG and TID.

Belongs to the dUTPase family. It depends on Mg(2+) as a cofactor.

The enzyme catalyses dUTP + H2O = dUMP + diphosphate + H(+). It participates in pyrimidine metabolism; dUMP biosynthesis; dUMP from dCTP (dUTP route): step 2/2. This enzyme is involved in nucleotide metabolism: it produces dUMP, the immediate precursor of thymidine nucleotides and it decreases the intracellular concentration of dUTP so that uracil cannot be incorporated into DNA. This is Deoxyuridine 5'-triphosphate nucleotidohydrolase from Porphyromonas gingivalis (strain ATCC 33277 / DSM 20709 / CIP 103683 / JCM 12257 / NCTC 11834 / 2561).